The sequence spans 63 residues: Cytochrome c oxidase subunit 5A, mitochondrial (63 aa).

It belongs to the cytochrome c oxidase subunit 5A family. In terms of assembly, component of the cytochrome c oxidase (complex IV, CIV), a multisubunit enzyme composed of a catalytic core of 3 subunits and several supernumerary subunits. The complex exists as a monomer or a dimer and forms supercomplexes (SCs) in the inner mitochondrial membrane with ubiquinol-cytochrome c oxidoreductase (cytochrome b-c1 complex, complex III, CIII).

Its subcellular location is the mitochondrion inner membrane. It participates in energy metabolism; oxidative phosphorylation. Component of the cytochrome c oxidase, the last enzyme in the mitochondrial electron transport chain which drives oxidative phosphorylation. The respiratory chain contains 3 multisubunit complexes succinate dehydrogenase (complex II, CII), ubiquinol-cytochrome c oxidoreductase (cytochrome b-c1 complex, complex III, CIII) and cytochrome c oxidase (complex IV, CIV), that cooperate to transfer electrons derived from NADH and succinate to molecular oxygen, creating an electrochemical gradient over the inner membrane that drives transmembrane transport and the ATP synthase. Cytochrome c oxidase is the component of the respiratory chain that catalyzes the reduction of oxygen to water. Electrons originating from reduced cytochrome c in the intermembrane space (IMS) are transferred via the dinuclear copper A center (CU(A)) of subunit 2 and heme A of subunit 1 to the active site in subunit 1, a binuclear center (BNC) formed by heme A3 and copper B (CU(B)). The BNC reduces molecular oxygen to 2 water molecules using 4 electrons from cytochrome c in the IMS and 4 protons from the mitochondrial matrix. The chain is Cytochrome c oxidase subunit 5A, mitochondrial (COVA) from Manduca sexta (Tobacco hawkmoth).